The sequence spans 131 residues: Small ribosomal subunit protein uS8 (131 aa).

The protein belongs to the universal ribosomal protein uS8 family. In terms of assembly, part of the 30S ribosomal subunit. Contacts proteins S5 and S12.

Its function is as follows. One of the primary rRNA binding proteins, it binds directly to 16S rRNA central domain where it helps coordinate assembly of the platform of the 30S subunit. The polypeptide is Small ribosomal subunit protein uS8 (Bordetella parapertussis (strain 12822 / ATCC BAA-587 / NCTC 13253)).